The chain runs to 177 residues: ATP synthase subunit delta (177 aa).

Belongs to the ATPase delta chain family. In terms of assembly, F-type ATPases have 2 components, F(1) - the catalytic core - and F(0) - the membrane proton channel. F(1) has five subunits: alpha(3), beta(3), gamma(1), delta(1), epsilon(1). F(0) has three main subunits: a(1), b(2) and c(10-14). The alpha and beta chains form an alternating ring which encloses part of the gamma chain. F(1) is attached to F(0) by a central stalk formed by the gamma and epsilon chains, while a peripheral stalk is formed by the delta and b chains.

Its subcellular location is the cell inner membrane. In terms of biological role, f(1)F(0) ATP synthase produces ATP from ADP in the presence of a proton or sodium gradient. F-type ATPases consist of two structural domains, F(1) containing the extramembraneous catalytic core and F(0) containing the membrane proton channel, linked together by a central stalk and a peripheral stalk. During catalysis, ATP synthesis in the catalytic domain of F(1) is coupled via a rotary mechanism of the central stalk subunits to proton translocation. This protein is part of the stalk that links CF(0) to CF(1). It either transmits conformational changes from CF(0) to CF(1) or is implicated in proton conduction. This chain is ATP synthase subunit delta, found in Neisseria meningitidis serogroup B (strain ATCC BAA-335 / MC58).